A 185-amino-acid chain; its full sequence is ATP-dependent protease subunit HslV (185 aa).

The active site involves Thr12. Na(+)-binding residues include Ala168, Cys171, and Thr174.

Belongs to the peptidase T1B family. HslV subfamily. In terms of assembly, a double ring-shaped homohexamer of HslV is capped on each side by a ring-shaped HslU homohexamer. The assembly of the HslU/HslV complex is dependent on binding of ATP.

It localises to the cytoplasm. The enzyme catalyses ATP-dependent cleavage of peptide bonds with broad specificity.. Allosterically activated by HslU binding. Its function is as follows. Protease subunit of a proteasome-like degradation complex believed to be a general protein degrading machinery. This Roseobacter denitrificans (strain ATCC 33942 / OCh 114) (Erythrobacter sp. (strain OCh 114)) protein is ATP-dependent protease subunit HslV.